The sequence spans 377 residues: RIB43A-like with coiled-coils protein 2 (377 aa).

A coiled-coil region spans residues 188–238 (ELKFDEAARDLQRLEITTRKAVCAAVKEFNKKQVVELAERKRQVKQQEQED). Residues 355–377 (QLDAAPSSQPTEDYFSQFNTRSR) form a disordered region. Polar residues predominate over residues 360 to 377 (PSSQPTEDYFSQFNTRSR).

The protein belongs to the RIB43A family. Microtubule inner protein component of sperm flagellar doublet microtubules.

The protein resides in the cytoplasm. Its subcellular location is the cytoskeleton. The protein localises to the cilium axoneme. It is found in the flagellum axoneme. Its function is as follows. Microtubule inner protein (MIP) part of the dynein-decorated doublet microtubules (DMTs) in cilia axoneme, which is required for motile cilia beating. This Rattus norvegicus (Rat) protein is RIB43A-like with coiled-coils protein 2.